Consider the following 125-residue polypeptide: Synaptobrevin (125 aa).

A disordered region spans residues 1 to 46 (MSGPQNPQAGPGGPPSGPPQPGGPPGPPQGPPQPVQQSKRLQQTQA). The Cytoplasmic portion of the chain corresponds to 1-103 (MSGPQNPQAG…KRKFWWKNCK (103 aa)). Positions 12-34 (GGPPSGPPQPGGPPGPPQGPPQP) are enriched in pro residues. Positions 40-100 (RLQQTQAQVE…GKLKRKFWWK (61 aa)) constitute a v-SNARE coiled-coil homology domain. The chain crosses the membrane as a helical; Anchor for type IV membrane protein span at residues 104–123 (MMIILGGIVAVIVTVIIVWA). Over 124-125 (AT) the chain is Vesicular.

Belongs to the synaptobrevin family.

The protein resides in the cytoplasmic vesicle. The protein localises to the secretory vesicle. It localises to the synaptic vesicle membrane. Its subcellular location is the synapse. It is found in the synaptosome. Its function is as follows. Intrinsic membrane protein of small synaptic vesicles. The chain is Synaptobrevin from Doryteuthis pealeii (Longfin inshore squid).